A 489-amino-acid polypeptide reads, in one-letter code: Betaine aldehyde dehydrogenase (489 aa).

K(+) is bound by residues T26 and D93. 150–152 (GAW) contacts NAD(+). The Charge relay system role is filled by K162. Residue 176–179 (KPSE) participates in NAD(+) binding. V180 provides a ligand contact to K(+). Residue 229–232 (GVET) participates in NAD(+) binding. L245 contributes to the K(+) binding site. E251 serves as the catalytic Proton acceptor. Residues G253, C285, and E386 each contribute to the NAD(+) site. The active-site Nucleophile is C285. At C285 the chain carries Cysteine sulfenic acid (-SOH). 2 residues coordinate K(+): K456 and G459. E463 (charge relay system) is an active-site residue.

The protein belongs to the aldehyde dehydrogenase family. As to quaternary structure, dimer of dimers. The cofactor is K(+).

The catalysed reaction is betaine aldehyde + NAD(+) + H2O = glycine betaine + NADH + 2 H(+). It functions in the pathway amine and polyamine biosynthesis; betaine biosynthesis via choline pathway; betaine from betaine aldehyde: step 1/1. Involved in the biosynthesis of the osmoprotectant glycine betaine. Catalyzes the irreversible oxidation of betaine aldehyde to the corresponding acid. This chain is Betaine aldehyde dehydrogenase, found in Burkholderia vietnamiensis (strain G4 / LMG 22486) (Burkholderia cepacia (strain R1808)).